The sequence spans 209 residues: Endoplasmic reticulum vesicle protein 25 (209 aa).

Positions 1–18 (MKYTTFGIISLFLSVTWA) are cleaved as a signal peptide. Residues 19–178 (LRFELAASFE…TNESTNRRVR (160 aa)) are Lumenal-facing. One can recognise a GOLD domain in the interval 31-119 (PFCIRDFVEA…MRNVEVNIES (89 aa)). Residues 179-199 (NFSMAVIVVFAALCAWQLNYL) form a helical membrane-spanning segment. Over 200–209 (KNYFRAKHII) the chain is Cytoplasmic.

Belongs to the EMP24/GP25L family.

It localises to the endoplasmic reticulum membrane. Its subcellular location is the golgi apparatus membrane. Its function is as follows. Constituent of COPII-coated endoplasmic reticulum-derived transport vesicles. Required for efficient transport of a subset of secretory proteins to the Golgi. Facilitates retrograde transport from the Golgi to the endoplasmic reticulum. This is Endoplasmic reticulum vesicle protein 25 (ERV25) from Eremothecium gossypii (strain ATCC 10895 / CBS 109.51 / FGSC 9923 / NRRL Y-1056) (Yeast).